A 726-amino-acid polypeptide reads, in one-letter code: Peroxisomal bifunctional enzyme (726 aa).

The interval 1–284 (MAEYLRLPHS…FAERSAPKWS (284 aa)) is enoyl-CoA hydratase / isomerase. Lysine 38 carries the N6-succinyllysine modification. Glycine 103 serves as a coordination point for substrate. Lysine 167 is subject to N6-acetyllysine; alternate. An N6-succinyllysine; alternate modification is found at lysine 167. Lysine 173 carries the N6-acetyllysine modification. Lysine 185 carries the N6-succinyllysine modification. Lysine 221 carries the N6-acetyllysine; alternate modification. Lysine 221 is modified (N6-succinyllysine; alternate). 3 positions are modified to N6-succinyllysine: lysine 282, lysine 292, and lysine 333. Residues 285-575 (TPSGASWKTA…DMLCELGRFG (291 aa)) form a 3-hydroxyacyl-CoA dehydrogenase region. N6-acetyllysine is present on residues lysine 348 and lysine 352. The tract at residues 352–371 (KSRQQCGQQRSGPKPRFSSS) is disordered. The segment covering 353–371 (SRQQCGQQRSGPKPRFSSS) has biased composition (polar residues). Lysine 467 is subject to N6-acetyllysine. Lysine 535 is subject to N6-succinyllysine. N6-acetyllysine; alternate occurs at positions 587, 594, and 713. An N6-succinyllysine; alternate mark is found at lysine 587, lysine 594, and lysine 713. Positions 724–726 (SKL) match the Microbody targeting signal motif. Lysine 725 is subject to N6-succinyllysine.

This sequence in the N-terminal section; belongs to the enoyl-CoA hydratase/isomerase family. The protein in the C-terminal section; belongs to the 3-hydroxyacyl-CoA dehydrogenase family. Monomer. Acetylated, leading to enhanced enzyme activity. Acetylation is enhanced by up to 80% after treatment either with trichostin A (TSA) or with nicotinamide (NAM) with highest increase on Lys-348. Acetylation and enzyme activity increased by about 1.5% on addition of fatty acids.

It is found in the peroxisome. The catalysed reaction is a (3S)-3-hydroxyacyl-CoA = a (2E)-enoyl-CoA + H2O. It carries out the reaction a 4-saturated-(3S)-3-hydroxyacyl-CoA = a (3E)-enoyl-CoA + H2O. It catalyses the reaction a (3Z)-enoyl-CoA = a 4-saturated (2E)-enoyl-CoA. The enzyme catalyses a (3E)-enoyl-CoA = a 4-saturated (2E)-enoyl-CoA. The catalysed reaction is a (3S)-3-hydroxyacyl-CoA + NAD(+) = a 3-oxoacyl-CoA + NADH + H(+). It carries out the reaction (2S,3S)-3-hydroxy-2-methylbutanoyl-CoA = (2E)-2-methylbut-2-enoyl-CoA + H2O. It catalyses the reaction (3S)-hydroxyhexadecanoyl-CoA + NAD(+) = 3-oxohexadecanoyl-CoA + NADH + H(+). The enzyme catalyses (3S)-hydroxyhexadecanoyl-CoA = (2E)-hexadecenoyl-CoA + H2O. The catalysed reaction is (2E)-hexadecenedioyl-CoA + H2O = (3S)-hydroxyhexadecanedioyl-CoA. It carries out the reaction (3S)-hydroxyhexadecanedioyl-CoA + NAD(+) = 3-oxohexadecanedioyl-CoA + NADH + H(+). It catalyses the reaction (3E,5Z)-tetradecadienoyl-CoA = (2E,5Z)-tetradecadienoyl-CoA. The enzyme catalyses (3E,5Z)-octadienoyl-CoA = (2E,5Z)-octadienoyl-CoA. The catalysed reaction is (3S)-hydroxydecanoyl-CoA + NAD(+) = 3-oxodecanoyl-CoA + NADH + H(+). It carries out the reaction (3E)-decenoyl-CoA = (2E)-decenoyl-CoA. It catalyses the reaction (3Z)-hexenoyl-CoA = (2E)-hexenoyl-CoA. The enzyme catalyses (3E)-hexenoyl-CoA = (2E)-hexenoyl-CoA. The catalysed reaction is (3S)-hydroxydecanoyl-CoA = (2E)-decenoyl-CoA + H2O. It carries out the reaction (3S)-hydroxyhexanoyl-CoA = (2E)-hexenoyl-CoA + H2O. Its pathway is lipid metabolism; fatty acid beta-oxidation. With respect to regulation, enzyme activity enhanced by acetylation. Peroxisomal trifunctional enzyme possessing 2-enoyl-CoA hydratase, 3-hydroxyacyl-CoA dehydrogenase, and delta 3, delta 2-enoyl-CoA isomerase activities. Catalyzes two of the four reactions of the long chain fatty acids peroxisomal beta-oxidation pathway. Can also use branched-chain fatty acids such as 2-methyl-2E-butenoyl-CoA as a substrate, which is hydrated into (2S,3S)-3-hydroxy-2-methylbutanoyl-CoA. Optimal isomerase for 2,5 double bonds into 3,5 form isomerization in a range of enoyl-CoA species. Also able to isomerize both 3-cis and 3-trans double bonds into the 2-trans form in a range of enoyl-CoA species. Regulates the amount of medium-chain dicarboxylic fatty acids which are essential regulators of all fatty acid oxidation pathways. Also involved in the degradation of long-chain dicarboxylic acids through peroxisomal beta-oxidation. The protein is Peroxisomal bifunctional enzyme (EHHADH) of Cavia porcellus (Guinea pig).